Consider the following 223-residue polypeptide: Protein-disulfide oxidoreductase DsbI (223 aa).

Residues 26 to 46 traverse the membrane as a helical segment; the sequence is LLWLLMAVAMGALIILAHSFF. A disulfide bridge links cysteine 55 with cysteine 58. The next 2 helical transmembrane spans lie at 59 to 78 and 82 to 102; these read VYIR…AAIN and IILK…GLKF. Cysteine 127 and cysteine 153 form a disulfide bridge. Residues 198 to 218 traverse the membrane as a helical segment; the sequence is CMLAFGMCLVLLVIMSGAWAL.

The protein belongs to the DsbB family. DsbI subfamily. In terms of assembly, interacts with DsbL.

It localises to the cell inner membrane. Its function is as follows. Required for disulfide bond formation in some proteins. Part of a redox system composed of DsbI and DsbL that mediates formation of an essential disulfide bond in AssT. This is Protein-disulfide oxidoreductase DsbI from Escherichia coli O1:K1 / APEC.